A 273-amino-acid chain; its full sequence is Manganese catalase (273 aa).

Position 35 (glutamate 35) interacts with Mn(2+). Ca(2+) is bound by residues aspartate 57 and aspartate 61. Residues glutamate 66, histidine 69, glutamate 149, and histidine 182 each contribute to the Mn(2+) site. Ca(2+) is bound by residues asparagine 220, serine 222, and glycine 224. A disordered region spans residues 254 to 273 (EKPELKPAPPCVHNTLPGRE).

It belongs to the manganese catalase family. Homohexamer. Requires Ca(2+) as cofactor. Mn(2+) is required as a cofactor.

It carries out the reaction 2 H2O2 = O2 + 2 H2O. Inhibited in the presence of EDTA. Resistant to inhibition by sodium azide. Its function is as follows. Catalyzes the decomposition of hydrogen peroxide into water and oxygen. No significant activity could be detected with any of the other tested substrates, including glutathione, pyrogallol, NADH, NADPH and o-dianisidine. The sequence is that of Manganese catalase from Bacillus subtilis.